Consider the following 340-residue polypeptide: AAGSVPATNQLVDYVVNVGVGSPATTYSLLVDTGSSNTWLGADKSYVKTSTSSATSDKVSVTYGSGSFSGTEYTDTVTLGSLTIPKQSIGVASRDSGFDGVDGILGVGPVDLTVGTLSPHTSTSIPTVTDNLFSQGTIPTNLLAVSFEPTTSESSTNGELTFGATDSSKYTGSITYTPITSTSPASAYWGINQTIRYGSSTSILSSTAGIVDTGTTLTLIASDAFAKYKKATGAVADNNTGLLRLTTAQYANLQSLFFTIGGQTFELTANAQIWPRNLNTAIGGSASSVYLIVGDLGSDSGEGLDFINGLTFLERFYSVYDTTNKRLGLATTSFTTATSN.

The Peptidase A1 domain occupies 14-330; it reads YVVNVGVGSP…DTTNKRLGLA (317 aa). Asp32 is an active-site residue. N-linked (GlcNAc...) asparagine glycosylation is present at Asn192. Asp212 is an active-site residue. Residue Asn238 is glycosylated (N-linked (GlcNAc...) asparagine).

This sequence belongs to the peptidase A1 family.

The enzyme catalyses Milk clotting activity, broad specificity, but fails to cleave 15-Leu-|-Tyr-16 or 16-Tyr-|-Leu-17 of insulin B chain.. This is Polyporopepsin from Irpex lacteus (Milk-white toothed polypore).